The following is a 555-amino-acid chain: Formate--tetrahydrofolate ligase (555 aa).

Residue 65–72 participates in ATP binding; it reads TPAGEGKS.

It belongs to the formate--tetrahydrofolate ligase family.

The catalysed reaction is (6S)-5,6,7,8-tetrahydrofolate + formate + ATP = (6R)-10-formyltetrahydrofolate + ADP + phosphate. The protein operates within one-carbon metabolism; tetrahydrofolate interconversion. This chain is Formate--tetrahydrofolate ligase, found in Staphylococcus aureus (strain USA300).